Consider the following 201-residue polypeptide: UPF0301 protein Avi_1069 (201 aa).

It belongs to the UPF0301 (AlgH) family.

This chain is UPF0301 protein Avi_1069, found in Allorhizobium ampelinum (strain ATCC BAA-846 / DSM 112012 / S4) (Agrobacterium vitis (strain S4)).